Consider the following 46-residue polypeptide: Protein PsbN (46 aa).

A helical membrane pass occupies residues A7 to Y27.

The protein belongs to the PsbN family.

It localises to the cellular thylakoid membrane. Its function is as follows. May play a role in photosystem I and II biogenesis. This chain is Protein PsbN, found in Parasynechococcus marenigrum (strain WH8102).